A 451-amino-acid chain; its full sequence is Phosphoglucosamine mutase (451 aa).

Ser103 functions as the Phosphoserine intermediate in the catalytic mechanism. Mg(2+) is bound by residues Ser103, Asp243, Asp245, and Asp247. Ser103 is modified (phosphoserine).

Belongs to the phosphohexose mutase family. It depends on Mg(2+) as a cofactor. In terms of processing, activated by phosphorylation.

The enzyme catalyses alpha-D-glucosamine 1-phosphate = D-glucosamine 6-phosphate. Catalyzes the conversion of glucosamine-6-phosphate to glucosamine-1-phosphate. In Lactobacillus gasseri (strain ATCC 33323 / DSM 20243 / BCRC 14619 / CIP 102991 / JCM 1131 / KCTC 3163 / NCIMB 11718 / NCTC 13722 / AM63), this protein is Phosphoglucosamine mutase.